The following is a 115-amino-acid chain: uncharacterized protein (115 aa).

This sequence belongs to the transposase 34 family.

This is an uncharacterized protein from Sinorhizobium fredii (strain NBRC 101917 / NGR234).